Here is a 209-residue protein sequence, read N- to C-terminus: High frequency lysogenization protein HflD homolog (209 aa).

Belongs to the HflD family.

It is found in the cytoplasm. The protein resides in the cell inner membrane. In Saccharophagus degradans (strain 2-40 / ATCC 43961 / DSM 17024), this protein is High frequency lysogenization protein HflD homolog.